We begin with the raw amino-acid sequence, 314 residues long: L-lactate dehydrogenase 1 (314 aa).

Residues Val16, Asp37, Lys42, Tyr68, and 82 to 83 (GL) contribute to the NAD(+) site. Substrate contacts are provided by residues Gln85, Arg91, and 123–126 (NPVD). NAD(+) contacts are provided by residues 121–123 (ATN) and Ser146. Position 151-154 (151-154 (DSAR)) interacts with substrate. Residues Arg156 and His171 each coordinate beta-D-fructose 1,6-bisphosphate. Catalysis depends on His178, which acts as the Proton acceptor. Tyr223 bears the Phosphotyrosine mark. A substrate-binding site is contributed by Thr232.

This sequence belongs to the LDH/MDH superfamily. LDH family. In terms of assembly, homotetramer.

Its subcellular location is the cytoplasm. The catalysed reaction is (S)-lactate + NAD(+) = pyruvate + NADH + H(+). It functions in the pathway fermentation; pyruvate fermentation to lactate; (S)-lactate from pyruvate: step 1/1. Its activity is regulated as follows. Allosterically activated by fructose 1,6-bisphosphate (FBP). In terms of biological role, catalyzes the conversion of lactate to pyruvate. In Bacillus cereus (strain ATCC 14579 / DSM 31 / CCUG 7414 / JCM 2152 / NBRC 15305 / NCIMB 9373 / NCTC 2599 / NRRL B-3711), this protein is L-lactate dehydrogenase 1.